The sequence spans 637 residues: Formate--tetrahydrofolate ligase (637 aa).

81–88 (TPLGEGKS) is an ATP binding site.

It belongs to the formate--tetrahydrofolate ligase family. In terms of assembly, homodimer.

The enzyme catalyses (6S)-5,6,7,8-tetrahydrofolate + formate + ATP = (6R)-10-formyltetrahydrofolate + ADP + phosphate. Its pathway is one-carbon metabolism; tetrahydrofolate interconversion. The chain is Formate--tetrahydrofolate ligase from Spinacia oleracea (Spinach).